Here is a 143-residue protein sequence, read N- to C-terminus: Small ribosomal subunit protein bS6 (143 aa).

Residues 100–143 form a disordered region; that stretch reads QSFIMKSKDDKGDKPERRRRDDDESGDVGVSNDSDNDGGNAEAA. Residues 105–121 show a composition bias toward basic and acidic residues; the sequence is KSKDDKGDKPERRRRDD. Residues 126–143 are compositionally biased toward low complexity; the sequence is DVGVSNDSDNDGGNAEAA.

This sequence belongs to the bacterial ribosomal protein bS6 family.

Functionally, binds together with bS18 to 16S ribosomal RNA. The protein is Small ribosomal subunit protein bS6 of Xylella fastidiosa (strain M12).